A 135-amino-acid chain; its full sequence is D-ribose pyranase (135 aa).

The active-site Proton donor is His-20. Substrate is bound by residues Asp-28, His-102, and 124 to 126 (YSN).

It belongs to the RbsD / FucU family. RbsD subfamily. In terms of assembly, homodecamer.

It localises to the cytoplasm. The enzyme catalyses beta-D-ribopyranose = beta-D-ribofuranose. It functions in the pathway carbohydrate metabolism; D-ribose degradation; D-ribose 5-phosphate from beta-D-ribopyranose: step 1/2. Catalyzes the interconversion of beta-pyran and beta-furan forms of D-ribose. This is D-ribose pyranase from Thermotoga petrophila (strain ATCC BAA-488 / DSM 13995 / JCM 10881 / RKU-1).